Consider the following 448-residue polypeptide: Deoxyguanosinetriphosphate triphosphohydrolase-like protein (448 aa).

The disordered stretch occupies residues 1-26 (MQINSSWQERFLADPPREKDHRPPFR). Residues 11–26 (FLADPPREKDHRPPFR) are compositionally biased toward basic and acidic residues. An HD domain is found at 59 to 272 (RLTHSLEVAQ…MELADDIAYA (214 aa)).

It belongs to the dGTPase family. Type 2 subfamily.

The sequence is that of Deoxyguanosinetriphosphate triphosphohydrolase-like protein from Histophilus somni (strain 129Pt) (Haemophilus somnus).